A 52-amino-acid polypeptide reads, in one-letter code: uncharacterized protein (52 aa).

The tract at residues 24-52 is disordered; it reads LRENPSKNVRTIPDAGDENSSFGHARVIA.

This is an uncharacterized protein from Treponema pallidum (strain Nichols).